The chain runs to 221 residues: Stromal cell-derived factor 2-like protein 1 (221 aa).

The signal sequence occupies residues 1–28 (MWSAGSGRAAGPALLGILLALSLSGGRA). MIR domains are found at residues 33 to 87 (AGLV…IRGG), 95 to 150 (GSPV…VRCS), and 151 to 205 (GQHW…AMEG). The Prevents secretion from ER signature appears at 218-221 (HDEL).

The protein resides in the endoplasmic reticulum lumen. The chain is Stromal cell-derived factor 2-like protein 1 (SDF2L1) from Bos taurus (Bovine).